A 425-amino-acid polypeptide reads, in one-letter code: Enolase (425 aa).

Gln-163 contacts (2R)-2-phosphoglycerate. The active-site Proton donor is the Glu-205. The Mg(2+) site is built by Asp-242, Glu-285, and Asp-312. (2R)-2-phosphoglycerate contacts are provided by Lys-337, Arg-366, Ser-367, and Lys-388. Lys-337 acts as the Proton acceptor in catalysis.

This sequence belongs to the enolase family. Mg(2+) is required as a cofactor.

The protein resides in the cytoplasm. Its subcellular location is the secreted. It localises to the cell surface. The catalysed reaction is (2R)-2-phosphoglycerate = phosphoenolpyruvate + H2O. Its pathway is carbohydrate degradation; glycolysis; pyruvate from D-glyceraldehyde 3-phosphate: step 4/5. In terms of biological role, catalyzes the reversible conversion of 2-phosphoglycerate (2-PG) into phosphoenolpyruvate (PEP). It is essential for the degradation of carbohydrates via glycolysis. The protein is Enolase of Syntrophomonas wolfei subsp. wolfei (strain DSM 2245B / Goettingen).